Reading from the N-terminus, the 109-residue chain is Large ribosomal subunit protein uL24 (109 aa).

It belongs to the universal ribosomal protein uL24 family. In terms of assembly, part of the 50S ribosomal subunit.

Functionally, one of two assembly initiator proteins, it binds directly to the 5'-end of the 23S rRNA, where it nucleates assembly of the 50S subunit. Its function is as follows. One of the proteins that surrounds the polypeptide exit tunnel on the outside of the subunit. The chain is Large ribosomal subunit protein uL24 from Hamiltonella defensa subsp. Acyrthosiphon pisum (strain 5AT).